The following is a 526-amino-acid chain: Thymocyte selection-associated high mobility group box protein TOX (526 aa).

Over residues 194–203 (NMGGTNVAHN) the composition is skewed to polar residues. A disordered region spans residues 194–264 (NMGGTNVAHN…KKDPNEPQKP (71 aa)). Over residues 209–220 (GSKSATPSPSSS) the composition is skewed to low complexity. Over residues 228–245 (DASKINGGEKRPASDMGK) the composition is skewed to basic and acidic residues. The short motif at 237–256 (KRPASDMGKKPKTPKKKKKK) is the Nuclear localization signal element. A compositionally biased stretch (basic residues) spans 246-256 (KPKTPKKKKKK). A DNA-binding region (HMG box) is located at residues 261–329 (PQKPVSAYAL…EYLKQLAAYR (69 aa)).

Belongs to the high motility group (HMG) box superfamily. Interacts with HBO1 complex composed at least of KAT7/HBO1, ING4, MEAF6, and JADE2; this complex is involved in histone acetylation. Interacts with DNMT1, LEO1, PAF1, SAP130 and SIN3A; these interactors regulate chromatin remodeling. Interacts with an array of proteins involved in RNA processing and translation and DNA replication. In terms of tissue distribution, expressed in neurons of the subventricular zone (at protein level). Expressed in distinct subpopulations of thymocytes undergoing positive selection: double CD4-positive CD8-positive (DP) cells, CD4-positive CD8-low transitional cells and in single CD4-positive and CD8-positive cells (at protein level). Expressed in ILC progenitors and mature ILC subsets: ILC1, ILC2 and ILC3 (at protein level). Expressed in lymphoid tissue-inducer cells and bone marrow NK cell subsets. Abundant in thymus, liver and brain. Also detected in small intestine, spleen, stomach and testis. Highly expressed in tumor-infiltrating CD8-positive T cells (at protein level).

It is found in the nucleus. Functionally, transcriptional regulator with a major role in neural stem cell commitment and corticogenesis as well as in lymphoid cell development and lymphoid tissue organogenesis. Binds to GC-rich DNA sequences in the proximity of transcription start sites and may alter chromatin structure, modifying access of transcription factors to DNA. During cortical development, controls the neural stem cell pool by inhibiting the switch from proliferative to differentiating progenitors. Beyond progenitor cells, promotes neurite outgrowth in newborn neurons migrating to reach the cortical plate. May activate or repress critical genes for neural stem cell fate such as SOX2, EOMES and ROBO2. Plays an essential role in the development of lymphoid tissue-inducer (LTi) cells, a subset necessary for the formation of secondary lymphoid organs: peripheral lymph nodes and Peyer's patches. Acts as a developmental checkpoint and regulates thymocyte positive selection toward T cell lineage commitment. Required for the development of various T cell subsets, including CD4-positive helper T cells, CD8-positive cytotoxic T cells, regulatory T cells and CD1D-dependent natural killer T (NKT) cells. Required for the differentiation of common lymphoid progenitors (CMP) to innate lymphoid cells (ILC). May regulate the NOTCH-mediated gene program, promoting differentiation of the ILC lineage. Required at the progenitor phase of NK cell development in the bone marrow to specify NK cell lineage commitment. Upon chronic antigen stimulation, diverts T cell development by promoting the generation of exhaustive T cells, while suppressing effector and memory T cell programming. May regulate the expression of genes encoding inhibitory receptors such as PDCD1 and induce the exhaustion program, to prevent the overstimulation of T cells and activation-induced cell death. This is Thymocyte selection-associated high mobility group box protein TOX from Mus musculus (Mouse).